We begin with the raw amino-acid sequence, 117 residues long: Non-specific lipid-transfer protein 1 (117 aa).

The N-terminal stretch at 1-25 (MAGLVKLSCLVLACMIVAGPIATNA) is a signal peptide. Disulfide bonds link Cys-29–Cys-76, Cys-39–Cys-53, Cys-54–Cys-99, and Cys-74–Cys-113.

The protein belongs to the plant LTP family.

Its function is as follows. Plant non-specific lipid-transfer proteins transfer phospholipids as well as galactolipids across membranes. May play a role in wax or cutin deposition in the cell walls of expanding epidermal cells and certain secretory tissues. In Brassica napus (Rape), this protein is Non-specific lipid-transfer protein 1 (LTP1).